The sequence spans 301 residues: Protease HtpX (301 aa).

2 helical membrane-spanning segments follow: residues 4–24 and 44–64; these read IGLFLLTNLAILVVLGVVLFI and TGLLIIAAVIGFGGSFISLAM. A Zn(2+)-binding site is contributed by His150. Residue Glu151 is part of the active site. Residue His154 coordinates Zn(2+). A run of 2 helical transmembrane segments spans residues 165-185 and 201-221; these read LIQGVVNTFVVFFSRIIGHFV and FITSIFAQIVLGILASVIVMW. A Zn(2+)-binding site is contributed by Glu227.

This sequence belongs to the peptidase M48B family. Zn(2+) is required as a cofactor.

The protein resides in the cell inner membrane. In Alkalilimnicola ehrlichii (strain ATCC BAA-1101 / DSM 17681 / MLHE-1), this protein is Protease HtpX.